A 132-amino-acid chain; its full sequence is DNA-directed RNA polymerase subunit omega (132 aa).

The disordered stretch occupies residues 100–119; sequence VSAEEEASHGTAGMSAEELE.

Belongs to the RNA polymerase subunit omega family. In terms of assembly, the RNAP catalytic core consists of 2 alpha, 1 beta, 1 beta' and 1 omega subunit. When a sigma factor is associated with the core the holoenzyme is formed, which can initiate transcription.

It carries out the reaction RNA(n) + a ribonucleoside 5'-triphosphate = RNA(n+1) + diphosphate. Its function is as follows. Promotes RNA polymerase assembly. Latches the N- and C-terminal regions of the beta' subunit thereby facilitating its interaction with the beta and alpha subunits. This Gluconacetobacter diazotrophicus (strain ATCC 49037 / DSM 5601 / CCUG 37298 / CIP 103539 / LMG 7603 / PAl5) protein is DNA-directed RNA polymerase subunit omega.